We begin with the raw amino-acid sequence, 161 residues long: Alpha-crystallin A chain (161 aa).

Met-1 carries the post-translational modification N-acetylmethionine. Residues 1 to 53 (MDVTIQHPWFKRALGPFYHNRLFDQFFGEGLFEYDLLPFQSLFRTVLDSGISE) are required for complex formation with BFSP1 and BFSP2. Residues Gln-6 and Gln-40 each carry the deamidated glutamine; partial modification. In terms of domain architecture, sHSP spans 41–150 (SLFRTVLDSG…SHSERAIPVS (110 aa)). N6-acetyllysine is present on Lys-87. His-88 is a Zn(2+) binding site. The residue at position 89 (Asn-89) is a Deamidated asparagine; partial. Positions 90 and 95 each coordinate Zn(2+). The residue at position 110 (Ser-110) is a Phosphoserine. Asn-111 is subject to Deamidated asparagine; partial. A disulfide bridge connects residues Cys-119 and Cys-130. Gln-135 carries the deamidated glutamine; partial modification. The disordered stretch occupies residues 135-161 (QSGMDASHSERAIPVSREEKASSAPNS). Basic and acidic residues predominate over residues 141 to 155 (SHSERAIPVSREEKA). A Zn(2+)-binding site is contributed by His-142. O-linked (GlcNAc) serine glycosylation is present at Ser-150.

Belongs to the small heat shock protein (HSP20) family. In terms of assembly, heteromer composed of three CRYAA and one CRYAB subunits. Inter-subunit bridging via zinc ions enhances stability, which is crucial as there is no protein turn over in the lens. Can also form homodimers and homotetramers (dimers of dimers) which serve as the building blocks of homooligomers. Within homooligomers, the zinc-binding motif is created from residues of 3 different molecules. His-88 and Glu-90 from one molecule are ligands of the zinc ion, and His-95 and His-142 residues from additional molecules complete the site with tetrahedral coordination geometry. Part of a complex required for lens intermediate filament formation composed of BFSP1, BFSP2 and CRYAA. In terms of processing, undergoes age-dependent proteolytical cleavage at the C-terminus.

The protein localises to the cytoplasm. It localises to the nucleus. Its function is as follows. Contributes to the transparency and refractive index of the lens. In its oxidized form (absence of intramolecular disulfide bond), acts as a chaperone, preventing aggregation of various proteins under a wide range of stress conditions. Required for the correct formation of lens intermediate filaments as part of a complex composed of BFSP1, BFSP2 and CRYAA. In Trichechus inunguis (Amazon manatee), this protein is Alpha-crystallin A chain (CRYAA).